Here is a 129-residue protein sequence, read N- to C-terminus: Methylmalonyl-CoA decarboxylase subunit gamma (129 aa).

Low complexity-rich tracts occupy residues 24–39 and 49–58; these read APAA…APAP and PAAAAAPVPA. The interval 24–58 is disordered; that stretch reads APAAAPKAAPAAAPAPKAAPAPAPAPAAAAAPVPA. The Biotinyl-binding domain occupies 51 to 129; that stretch reads AAAAPVPAGA…STGDDMVVLG (79 aa). An N6-biotinyllysine modification is found at lysine 95.

The methylmalonyl-CoA decarboxylase is composed of five subunits: the carboxyltransferase alpha subunit (MmdA), the tunnel beta subunit (MmdB), the biotin-containing gamma subunit (MmdC), and the delta (MmdD) and epsilon (MmdE) subunits. The cofactor is biotin.

It is found in the cell membrane. It catalyses the reaction (S)-methylmalonyl-CoA + Na(+)(in) + H(+)(out) = propanoyl-CoA + Na(+)(out) + CO2. With respect to regulation, completely inhibited by avidin. Biotin-containing subunit of the sodium ion pump methylmalonyl-CoA decarboxylase, which converts the chemical energy of a decarboxylation reaction into an electrochemical gradient of Na(+) ions across the cytoplasmic membrane, thereby creating a sodium ion motive force that is used for ATP synthesis. Can also convert malonyl-CoA into acetyl-CoA. In Veillonella parvula (Staphylococcus parvulus), this protein is Methylmalonyl-CoA decarboxylase subunit gamma.